A 128-amino-acid chain; its full sequence is Large ribosomal subunit protein bL19 (128 aa).

The protein belongs to the bacterial ribosomal protein bL19 family.

This protein is located at the 30S-50S ribosomal subunit interface and may play a role in the structure and function of the aminoacyl-tRNA binding site. The sequence is that of Large ribosomal subunit protein bL19 from Herminiimonas arsenicoxydans.